The chain runs to 300 residues: Nucleotide-binding protein MCCL_0516 (300 aa).

ATP is bound at residue G15–S22. Position 66–69 (D66–G69) interacts with GTP.

This sequence belongs to the RapZ-like family.

Its function is as follows. Displays ATPase and GTPase activities. The protein is Nucleotide-binding protein MCCL_0516 of Macrococcus caseolyticus (strain JCSC5402) (Macrococcoides caseolyticum).